We begin with the raw amino-acid sequence, 661 residues long: MKKFKVVSDFKPTGDQPKAIEMLTEGILKGEKFQTLLGVTGSGKTFTMAKVIENVQRPTLVLAHNKTLAAQLCSEFREFFPENAVEFFVSYYDYYQPEAYIPETDTYIEKDSSINDEIDKLRHSATSALFERRDVIIVASVSCIYSLGSPEDYLNLTLSLRPGMIKDRDEVIRELIRMQYERNDIDFRRGRFRVRGDVLEIFPASNTDRAIRVEFFGDEIERITEFDVLTGEVIGRRNHVAIFPASHYVTTSEKLKRAIKSIEEELEQRLQELRSMGKLVEAQRLEQRTRYDIEMLQEMGFCKGIENYSRHLTGRPPGSPPYTLLDYFPKDFIMFIDESHVTIPQVRAMYNGDKARKDALVEYGFRLPSAYDNRPLTFEEFEEKLNQVIFVSATPGPYELKKSSRVVEQIIRPTGLVDPEIEVHPVKGQIDHLIGEIRKRVEKNQRVLITTLTKKMAESLTEYLKDVGIRVRYMHSDIDTIERMQIIRDLRLGKFDVLVGINLLREGLDLPEVSLVAILDADKEGFLRSETSLIQTIGRAARNVDGKVIMYADRITKAMQKAIDETNRRRKIQIEYNQKHGIVPQTVRKGIRQIIEATISVAEEEEKYESIEKDIVQNMSKQEIEEYIKELEQQMKRFAIELEFEKAAKIRDKIFELKKLL.

Residues 25-178 enclose the Helicase ATP-binding domain; sequence EGILKGEKFQ…DEVIRELIRM (154 aa). 38-45 is a binding site for ATP; it reads GVTGSGKT. A Beta-hairpin motif is present at residues 91–114; it reads YYDYYQPEAYIPETDTYIEKDSSI. In terms of domain architecture, Helicase C-terminal spans 429–591; it reads QIDHLIGEIR…IVPQTVRKGI (163 aa). Positions 625–660 constitute a UVR domain; sequence EEYIKELEQQMKRFAIELEFEKAAKIRDKIFELKKL.

The protein belongs to the UvrB family. Forms a heterotetramer with UvrA during the search for lesions. Interacts with UvrC in an incision complex.

Its subcellular location is the cytoplasm. Its function is as follows. The UvrABC repair system catalyzes the recognition and processing of DNA lesions. A damage recognition complex composed of 2 UvrA and 2 UvrB subunits scans DNA for abnormalities. Upon binding of the UvrA(2)B(2) complex to a putative damaged site, the DNA wraps around one UvrB monomer. DNA wrap is dependent on ATP binding by UvrB and probably causes local melting of the DNA helix, facilitating insertion of UvrB beta-hairpin between the DNA strands. Then UvrB probes one DNA strand for the presence of a lesion. If a lesion is found the UvrA subunits dissociate and the UvrB-DNA preincision complex is formed. This complex is subsequently bound by UvrC and the second UvrB is released. If no lesion is found, the DNA wraps around the other UvrB subunit that will check the other stand for damage. The sequence is that of UvrABC system protein B from Caldicellulosiruptor saccharolyticus (strain ATCC 43494 / DSM 8903 / Tp8T 6331).